We begin with the raw amino-acid sequence, 103 residues long: Large ribosomal subunit protein bL21 (103 aa).

This sequence belongs to the bacterial ribosomal protein bL21 family. Part of the 50S ribosomal subunit. Contacts protein L20.

In terms of biological role, this protein binds to 23S rRNA in the presence of protein L20. The chain is Large ribosomal subunit protein bL21 from Alcanivorax borkumensis (strain ATCC 700651 / DSM 11573 / NCIMB 13689 / SK2).